Consider the following 348-residue polypeptide: MKFVDEVKVHVLSGNGGNGCVSFRREKYVPRGGPDGGDGGEGGSVIFVASEGKNTLLDFRYRHLFKAESGKHGQGRNRHGKGGRDLVLEVPAGTVIKDAETGEPLVDLSHPGDRWVAARGGRGGRGNARFVSSTRQAPRIAEDGREGEDRELVLELKLMADVGLVGLPNAGKSTLISVVSAARPRIADYPFTTLIPCLGVVRHGEAPPFVMADIPGLIEGAHDGAGLGIRFLRHIERTRILAHLVDISQLSPEEPLRPYRLIESELASYSARLGEKKRVIVLNKVDLVPERDRLEALVSRYEQLGHPVFPVSARTKEGLGELLSALVRILSESGVSLPVEDVEEHVGK.

Residues 1–159 form the Obg domain; that stretch reads MKFVDEVKVH…RELVLELKLM (159 aa). The 172-residue stretch at 160-331 folds into the OBG-type G domain; sequence ADVGLVGLPN…LLSALVRILS (172 aa). Residues 166–173, 191–195, 213–216, 283–286, and 312–314 each bind GTP; these read GLPNAGKS, FTTLI, DIPG, NKVD, and SAR. Positions 173 and 193 each coordinate Mg(2+).

It belongs to the TRAFAC class OBG-HflX-like GTPase superfamily. OBG GTPase family. Monomer. Mg(2+) serves as cofactor.

It localises to the cytoplasm. An essential GTPase which binds GTP, GDP and possibly (p)ppGpp with moderate affinity, with high nucleotide exchange rates and a fairly low GTP hydrolysis rate. Plays a role in control of the cell cycle, stress response, ribosome biogenesis and in those bacteria that undergo differentiation, in morphogenesis control. The chain is GTPase Obg from Syntrophobacter fumaroxidans (strain DSM 10017 / MPOB).